The primary structure comprises 495 residues: Lysine--tRNA ligase (495 aa).

Glutamate 406 and glutamate 413 together coordinate Mg(2+).

The protein belongs to the class-II aminoacyl-tRNA synthetase family. In terms of assembly, homodimer. Requires Mg(2+) as cofactor.

It is found in the cytoplasm. The catalysed reaction is tRNA(Lys) + L-lysine + ATP = L-lysyl-tRNA(Lys) + AMP + diphosphate. This Leptospira interrogans serogroup Icterohaemorrhagiae serovar Lai (strain 56601) protein is Lysine--tRNA ligase.